The primary structure comprises 278 residues: Orotidine 5'-phosphate decarboxylase (278 aa).

Residue lysine 95 is the Proton donor of the active site.

This sequence belongs to the OMP decarboxylase family. Type 2 subfamily.

The enzyme catalyses orotidine 5'-phosphate + H(+) = UMP + CO2. Its pathway is pyrimidine metabolism; UMP biosynthesis via de novo pathway; UMP from orotate: step 2/2. This chain is Orotidine 5'-phosphate decarboxylase, found in Mycobacterium ulcerans (strain Agy99).